Here is a 210-residue protein sequence, read N- to C-terminus: NADH dehydrogenase [ubiquinone] iron-sulfur protein 8, mitochondrial (210 aa).

Residues 1–34 (MRCLTTPVLLRALAQAARAGPPGGRSLHSSAVAA) constitute a mitochondrion transit peptide. 4Fe-4S ferredoxin-type domains follow at residues 102-131 (RRYPSGEERCIACKLCEAICPAQAITIEAE) and 141-170 (TRYDIDMTKCIYCGFCQEACPVDAIVEGPN). Positions 111, 114, 117, 121, 150, 153, 156, and 160 each coordinate [4Fe-4S] cluster.

The protein belongs to the complex I 23 kDa subunit family. Core subunit of respiratory chain NADH dehydrogenase (Complex I) which is composed of 45 different subunits. This is a component of the iron-sulfur (IP) fragment of the enzyme. Interacts with RAB5IF. The cofactor is [4Fe-4S] cluster.

It localises to the mitochondrion inner membrane. The enzyme catalyses a ubiquinone + NADH + 5 H(+)(in) = a ubiquinol + NAD(+) + 4 H(+)(out). Functionally, core subunit of the mitochondrial membrane respiratory chain NADH dehydrogenase (Complex I) which catalyzes electron transfer from NADH through the respiratory chain, using ubiquinone as an electron acceptor. Essential for the catalytic activity and assembly of complex I. The protein is NADH dehydrogenase [ubiquinone] iron-sulfur protein 8, mitochondrial (NDUFS8) of Gorilla gorilla gorilla (Western lowland gorilla).